The following is a 222-amino-acid chain: Capsular polysaccharide type 5 biosynthesis protein cap5A (222 aa).

Helical transmembrane passes span 20–40 and 172–192; these read ILII…FFVL and VVNL…YIFF.

Belongs to the CpsC/CapA family.

The protein resides in the cell membrane. In terms of biological role, required for the biosynthesis of type 5 capsular polysaccharide (Cap5/CP5). Might act as the chain-length regulator. The protein is Capsular polysaccharide type 5 biosynthesis protein cap5A (cap5A) of Staphylococcus aureus (strain Newman).